The primary structure comprises 257 residues: Hydroxyethylthiazole kinase (257 aa).

Position 49 (Met49) interacts with substrate. Residues Arg124 and Thr170 each contribute to the ATP site. Residue Gly197 participates in substrate binding.

It belongs to the Thz kinase family. Mg(2+) is required as a cofactor.

It catalyses the reaction 5-(2-hydroxyethyl)-4-methylthiazole + ATP = 4-methyl-5-(2-phosphooxyethyl)-thiazole + ADP + H(+). The protein operates within cofactor biosynthesis; thiamine diphosphate biosynthesis; 4-methyl-5-(2-phosphoethyl)-thiazole from 5-(2-hydroxyethyl)-4-methylthiazole: step 1/1. Catalyzes the phosphorylation of the hydroxyl group of 4-methyl-5-beta-hydroxyethylthiazole (THZ). The sequence is that of Hydroxyethylthiazole kinase from Klebsiella pneumoniae subsp. pneumoniae (strain ATCC 700721 / MGH 78578).